A 369-amino-acid polypeptide reads, in one-letter code: 4-hydroxy-3-methylbut-2-en-1-yl diphosphate synthase (flavodoxin) (369 aa).

Residues Cys-270, Cys-273, Cys-305, and Glu-312 each coordinate [4Fe-4S] cluster.

It belongs to the IspG family. Requires [4Fe-4S] cluster as cofactor.

It catalyses the reaction (2E)-4-hydroxy-3-methylbut-2-enyl diphosphate + oxidized [flavodoxin] + H2O + 2 H(+) = 2-C-methyl-D-erythritol 2,4-cyclic diphosphate + reduced [flavodoxin]. The protein operates within isoprenoid biosynthesis; isopentenyl diphosphate biosynthesis via DXP pathway; isopentenyl diphosphate from 1-deoxy-D-xylulose 5-phosphate: step 5/6. Its function is as follows. Converts 2C-methyl-D-erythritol 2,4-cyclodiphosphate (ME-2,4cPP) into 1-hydroxy-2-methyl-2-(E)-butenyl 4-diphosphate. The chain is 4-hydroxy-3-methylbut-2-en-1-yl diphosphate synthase (flavodoxin) from Pseudomonas entomophila (strain L48).